A 196-amino-acid polypeptide reads, in one-letter code: Large ribosomal subunit protein uL18 (196 aa).

It belongs to the universal ribosomal protein uL18 family. Part of the 50S ribosomal subunit. Contacts the 5S and 23S rRNAs.

Its function is as follows. This is one of the proteins that bind and probably mediate the attachment of the 5S RNA into the large ribosomal subunit, where it forms part of the central protuberance. The chain is Large ribosomal subunit protein uL18 from Desulfurococcus amylolyticus (strain DSM 18924 / JCM 16383 / VKM B-2413 / 1221n) (Desulfurococcus kamchatkensis).